Consider the following 195-residue polypeptide: Imidazoleglycerol-phosphate dehydratase (195 aa).

It belongs to the imidazoleglycerol-phosphate dehydratase family.

Its subcellular location is the cytoplasm. The catalysed reaction is D-erythro-1-(imidazol-4-yl)glycerol 3-phosphate = 3-(imidazol-4-yl)-2-oxopropyl phosphate + H2O. The protein operates within amino-acid biosynthesis; L-histidine biosynthesis; L-histidine from 5-phospho-alpha-D-ribose 1-diphosphate: step 6/9. The protein is Imidazoleglycerol-phosphate dehydratase of Beijerinckia indica subsp. indica (strain ATCC 9039 / DSM 1715 / NCIMB 8712).